We begin with the raw amino-acid sequence, 401 residues long: Argininosuccinate synthase (401 aa).

ATP contacts are provided by residues 7-15 and A34; that span reads AYSGGLDTS. The L-citrulline site is built by Y85 and S90. ATP is bound at residue G115. Residues T117, N121, and D122 each contribute to the L-aspartate site. Residue N121 participates in L-citrulline binding. Residues R125, S174, S183, E259, and Y271 each contribute to the L-citrulline site.

It belongs to the argininosuccinate synthase family. Type 1 subfamily. As to quaternary structure, homotetramer.

Its subcellular location is the cytoplasm. It carries out the reaction L-citrulline + L-aspartate + ATP = 2-(N(omega)-L-arginino)succinate + AMP + diphosphate + H(+). Its pathway is amino-acid biosynthesis; L-arginine biosynthesis; L-arginine from L-ornithine and carbamoyl phosphate: step 2/3. This Desulforamulus reducens (strain ATCC BAA-1160 / DSM 100696 / MI-1) (Desulfotomaculum reducens) protein is Argininosuccinate synthase.